Reading from the N-terminus, the 322-residue chain is Lymphatic vessel endothelial hyaluronic acid receptor 1 (322 aa).

An N-terminal signal peptide occupies residues 1–19 (MARCFSLVLLLTSIWTTRL). At 20–238 (LVQGSLRAEE…EAAGFGGVPT (219 aa)) the chain is on the extracellular side. Residues 40–130 (GITLVSKKAN…SRQFAAYCYN (91 aa)) form the Link domain. A glycan (N-linked (GlcNAc...) asparagine) is linked at N53. 2 disulfide bridges follow: C61–C128 and C85–C106. The N-linked (GlcNAc...) asparagine glycan is linked to N130. A helical transmembrane segment spans residues 239–259 (ALLVLALLFFGAAAGLGFCYV). The Cytoplasmic segment spans residues 260–322 (KRYVKAFPFT…TTVRCLEAEV (63 aa)). Residues 279–309 (ETKVVKEEKANDSNPNEESKKTDKNPEESKS) are compositionally biased toward basic and acidic residues. Positions 279–322 (ETKVVKEEKANDSNPNEESKKTDKNPEESKSPSKTTVRCLEAEV) are disordered.

In terms of assembly, homodimer; disulfide-linked. Interacts with PDGFB and IGFBP3. Forms a transient ternary complex with PDGFB and PDGFRB in TGN. In terms of processing, O-glycosylated. As to expression, mainly expressed in endothelial cells lining lymphatic vessels.

It localises to the cell membrane. Ligand-specific transporter trafficking between intracellular organelles (TGN) and the plasma membrane. Plays a role in autocrine regulation of cell growth mediated by growth regulators containing cell surface retention sequence binding (CRS). May act as a hyaluronan (HA) transporter, either mediating its uptake for catabolism within lymphatic endothelial cells themselves, or its transport into the lumen of afferent lymphatic vessels for subsequent re-uptake and degradation in lymph nodes. Binds to pericelluar hyaluronan matrices deposited on the surface of leukocytes and facilitates cell adhesion and migration through lymphatic endothelium. The sequence is that of Lymphatic vessel endothelial hyaluronic acid receptor 1 (LYVE1) from Homo sapiens (Human).